The following is a 433-amino-acid chain: Gamma-glutamyl phosphate reductase 1 (433 aa).

Belongs to the gamma-glutamyl phosphate reductase family.

It localises to the cytoplasm. It catalyses the reaction L-glutamate 5-semialdehyde + phosphate + NADP(+) = L-glutamyl 5-phosphate + NADPH + H(+). It functions in the pathway amino-acid biosynthesis; L-proline biosynthesis; L-glutamate 5-semialdehyde from L-glutamate: step 2/2. Functionally, catalyzes the NADPH-dependent reduction of L-glutamate 5-phosphate into L-glutamate 5-semialdehyde and phosphate. The product spontaneously undergoes cyclization to form 1-pyrroline-5-carboxylate. In Synechocystis sp. (strain ATCC 27184 / PCC 6803 / Kazusa), this protein is Gamma-glutamyl phosphate reductase 1.